Here is a 569-residue protein sequence, read N- to C-terminus: Potassium-transporting ATPase potassium-binding subunit (569 aa).

Helical transmembrane passes span 5–25 (GWAE…PLGV), 65–85 (GYAG…YAVL), 135–155 (LVLT…AAAL), 179–199 (LYVL…LGLP), 254–274 (LTNL…FFAF), 286–306 (ALVI…YWTE), 383–403 (GIAV…LMVG), 422–442 (LLTV…AAVL), 489–509 (MGVA…AMAG), and 528–548 (GGLF…LQFF).

The protein belongs to the KdpA family. As to quaternary structure, the system is composed of three essential subunits: KdpA, KdpB and KdpC.

It is found in the cell inner membrane. Its function is as follows. Part of the high-affinity ATP-driven potassium transport (or Kdp) system, which catalyzes the hydrolysis of ATP coupled with the electrogenic transport of potassium into the cytoplasm. This subunit binds the periplasmic potassium ions and delivers the ions to the membrane domain of KdpB through an intramembrane tunnel. This is Potassium-transporting ATPase potassium-binding subunit from Caulobacter sp. (strain K31).